The sequence spans 287 residues: RNA polymerase sigma factor RpoH (287 aa).

A sigma-70 factor domain-2 region spans residues 54 to 123 (LILSHLRFVI…IHEYVLRNWR (70 aa)). An Interaction with polymerase core subunit RpoC motif is present at residues 78–81 (DLIQ). The sigma-70 factor domain-4 stretch occupies residues 230–283 (ALSSLDERSRNIIHARWLDDSDHKMTLREIAHNYGISAERVRQLEKNAMKKLKV). Positions 256-275 (LREIAHNYGISAERVRQLEK) form a DNA-binding region, H-T-H motif.

Belongs to the sigma-70 factor family. RpoH subfamily. In terms of assembly, interacts with the RNA polymerase core enzyme.

The protein localises to the cytoplasm. Functionally, sigma factors are initiation factors that promote the attachment of RNA polymerase to specific initiation sites and are then released. This sigma factor is involved in regulation of expression of heat shock genes. The sequence is that of RNA polymerase sigma factor RpoH from Buchnera aphidicola subsp. Baizongia pistaciae (strain Bp).